The chain runs to 455 residues: Adenylyltransferase and sulfurtransferase MOCS3 (455 aa).

ATP is bound by residues Gly90, Asp111, 118–122 (SNLAR), Lys135, and 179–180 (DN). Residues 156-236 (AQALTPATAL…RPPPAETVTS (81 aa)) are interaction with NFS1. 2 residues coordinate Zn(2+): Cys220 and Cys223. Catalysis depends on Cys237, which acts as the Glycyl thioester intermediate; for adenylyltransferase activity. Zn(2+) is bound by residues Cys295 and Cys298. Cys314 and Cys322 are joined by a disulfide. Residues 345 to 453 (SRSPHLLLDV…WAAKIDGTFP (109 aa)) enclose the Rhodanese domain. The active-site Cysteine persulfide intermediate; for sulfurtransferase activity is the Cys410. Cys410 carries the post-translational modification Cysteine persulfide.

In the N-terminal section; belongs to the HesA/MoeB/ThiF family. UBA4 subfamily. Interacts with NFS1. Zn(2+) is required as a cofactor.

The protein localises to the cytoplasm. It is found in the cytosol. The enzyme catalyses [molybdopterin-synthase sulfur-carrier protein]-C-terminal Gly-Gly + ATP + H(+) = [molybdopterin-synthase sulfur-carrier protein]-C-terminal Gly-Gly-AMP + diphosphate. It carries out the reaction [molybdopterin-synthase sulfur-carrier protein]-C-terminal Gly-Gly-AMP + S-sulfanyl-L-cysteinyl-[cysteine desulfurase] + AH2 = [molybdopterin-synthase sulfur-carrier protein]-C-terminal-Gly-aminoethanethioate + L-cysteinyl-[cysteine desulfurase] + A + AMP + 2 H(+). It participates in tRNA modification; 5-methoxycarbonylmethyl-2-thiouridine-tRNA biosynthesis. It functions in the pathway cofactor biosynthesis; molybdopterin biosynthesis. In terms of biological role, plays a central role in 2-thiolation of mcm(5)S(2)U at tRNA wobble positions of cytosolic tRNA(Lys), tRNA(Glu) and tRNA(Gln). Also essential during biosynthesis of the molybdenum cofactor. Acts by mediating the C-terminal thiocarboxylation of sulfur carriers URM1 and MOCS2A. Its N-terminus first activates URM1 and MOCS2A as acyl-adenylates (-COAMP), then the persulfide sulfur on the catalytic cysteine is transferred to URM1 and MOCS2A to form thiocarboxylation (-COSH) of their C-terminus. The reaction probably involves hydrogen sulfide that is generated from the persulfide intermediate and that acts as a nucleophile towards URM1 and MOCS2A. Subsequently, a transient disulfide bond is formed. Does not use thiosulfate as sulfur donor; NFS1 acting as a sulfur donor for thiocarboxylation reactions. The chain is Adenylyltransferase and sulfurtransferase MOCS3 from Bos taurus (Bovine).